The primary structure comprises 568 residues: MTEIKDSSVKDENPGKQEESSIAVESREMSTATNNSKNIETTSSNGAEDIKIQRDVGDDKDLDDKEANDKSSKGLEEESDSKDRKTIETDQPSNNIGDIKSQKSEKSNGNARKETKQSERVNYKPGMRVLTKMSGFPWWPSMVVTESKMTSVARKSKPKRAGTFYPVIFFPNKEYLWTGSDSLTPLTSEAISQFLEKPKPKTASLIKAYKMAQSTPDLDSLSVPSSESEVSEEESDQEMSEPSPIEEDYNDTKARRITRKGTKKKTVTFDPSLESVPQKRLNASSNVSSNPAKKTRVSPRRSTAASKKKSPSSKRASSDEIEKDKEEEEGSVANEEDVAKRTFHSREQSLLFLRHKLQSSLLSPKQDLSQVDYKLVHNYLDKLANFQGIDVPLIQKTKIAVVVRKIFSLAGLPKENEDEVKSICGDILENRWKSLLQEISSQKQLSTDASQTQDASIANENETEIASLDEGSESKPTPSPPAEQLTDQKQNEDNEDKVKADSNGPTQNENETADASKDMISEEKSSKDADNSLEVAGKDFAEDGTEQTPNLAEPEDGVAAVDLSTGQK.

Positions 1 to 19 (MTEIKDSSVKDENPGKQEE) are enriched in basic and acidic residues. Disordered stretches follow at residues 1-126 (MTEI…YKPG), 213-340 (QSTP…DVAK), and 465-568 (IASL…TGQK). Over residues 29–46 (MSTATNNSKNIETTSSNG) the composition is skewed to polar residues. 2 stretches are compositionally biased toward basic and acidic residues: residues 48 to 88 (EDIK…KTIE) and 100 to 122 (KSQK…ERVN). The 65-residue stretch at 125-189 (PGMRVLTKMS…SDSLTPLTSE (65 aa)) folds into the PWWP domain. A compositionally biased stretch (low complexity) spans 214–228 (STPDLDSLSVPSSES). Positions 229 to 249 (EVSEEESDQEMSEPSPIEEDY) are enriched in acidic residues. Positions 255 to 266 (RRITRKGTKKKT) are enriched in basic residues. Residues 281 to 292 (LNASSNVSSNPA) show a composition bias toward polar residues. Over residues 325–336 (KEEEEGSVANEE) the composition is skewed to acidic residues. Basic and acidic residues-rich tracts occupy residues 489–500 (KQNEDNEDKVKA) and 514–541 (DASK…KDFA).

The protein is PWWP domain-containing protein2 (pdp2) of Schizosaccharomyces pombe (strain 972 / ATCC 24843) (Fission yeast).